The following is a 352-amino-acid chain: RNA 3'-terminal phosphate cyclase (352 aa).

Residues Gln100 and 297-301 each bind ATP; that span reads HLADQ. Catalysis depends on His322, which acts as the Tele-AMP-histidine intermediate.

This sequence belongs to the RNA 3'-terminal cyclase family. Type 1 subfamily.

The protein resides in the cytoplasm. The enzyme catalyses a 3'-end 3'-phospho-ribonucleotide-RNA + ATP = a 3'-end 2',3'-cyclophospho-ribonucleotide-RNA + AMP + diphosphate. In terms of biological role, catalyzes the conversion of 3'-phosphate to a 2',3'-cyclic phosphodiester at the end of RNA. The mechanism of action of the enzyme occurs in 3 steps: (A) adenylation of the enzyme by ATP; (B) transfer of adenylate to an RNA-N3'P to produce RNA-N3'PP5'A; (C) and attack of the adjacent 2'-hydroxyl on the 3'-phosphorus in the diester linkage to produce the cyclic end product. The biological role of this enzyme is unknown but it is likely to function in some aspects of cellular RNA processing. This chain is RNA 3'-terminal phosphate cyclase, found in Methanosarcina mazei (strain ATCC BAA-159 / DSM 3647 / Goe1 / Go1 / JCM 11833 / OCM 88) (Methanosarcina frisia).